The primary structure comprises 269 residues: Senescence-associated protein 13 (269 aa).

Position 21–45 (21–45 (LVTGGSKGIGEAVVEELAMLGAKVH)) interacts with NADP(+). Substrate is bound at residue Ser-154. The active-site Proton acceptor is Tyr-167.

Belongs to the short-chain dehydrogenases/reductases (SDR) family. SDR65C subfamily.

Functionally, unspecific reductase providing both diastereomeric alcohols from the prochiral ketones. Active on cyclic monoterpenes and small flexible lipophilic carbonyls. No activity with tropinone, nitrogen-containing tropinone analogs, tropine or pseudotropine as substrate. The protein is Senescence-associated protein 13 of Arabidopsis thaliana (Mouse-ear cress).